The chain runs to 1171 residues: Myosin-B/C (1171 aa).

The Myosin motor domain maps to 105–780; it reads ETVDDIGYLP…AAKELSILQR (676 aa). 199–206 contacts ATP; it reads GESGAGKT. The tract at residues 671–681 is actin-binding; the sequence is AHFIRCLKPNE. Residues 810 to 1171 form a tail region; that stretch reads IHFLTRLESN…CFEACAPDRP (362 aa).

This sequence belongs to the TRAFAC class myosin-kinesin ATPase superfamily. Myosin family.

The protein resides in the cytoplasm. Myosins are actin-based motor molecules with ATPase activity. Unconventional myosins serve in intracellular movements. Their highly divergent tails are presumed to bind to membranous compartments, which would be moved relative to actin filaments. Plays a role in proper daughter cell budding and separation. The sequence is that of Myosin-B/C from Toxoplasma gondii.